The primary structure comprises 444 residues: ATP-dependent protease ATPase subunit HslU (444 aa).

ATP contacts are provided by residues Val18, 60-65 (GVGKTE), Asp258, Glu323, and Arg395.

This sequence belongs to the ClpX chaperone family. HslU subfamily. In terms of assembly, a double ring-shaped homohexamer of HslV is capped on each side by a ring-shaped HslU homohexamer. The assembly of the HslU/HslV complex is dependent on binding of ATP.

It is found in the cytoplasm. ATPase subunit of a proteasome-like degradation complex; this subunit has chaperone activity. The binding of ATP and its subsequent hydrolysis by HslU are essential for unfolding of protein substrates subsequently hydrolyzed by HslV. HslU recognizes the N-terminal part of its protein substrates and unfolds these before they are guided to HslV for hydrolysis. The chain is ATP-dependent protease ATPase subunit HslU from Thioalkalivibrio sulfidiphilus (strain HL-EbGR7).